The sequence spans 250 residues: Probable transcriptional regulatory protein Ppha_0657 (250 aa).

It belongs to the TACO1 family.

The protein resides in the cytoplasm. The protein is Probable transcriptional regulatory protein Ppha_0657 of Pelodictyon phaeoclathratiforme (strain DSM 5477 / BU-1).